The primary structure comprises 557 residues: 2-isopropylmalate synthase (557 aa).

The region spanning 33–307 is the Pyruvate carboxyltransferase domain; the sequence is PIWCSSDLRD…DPQLDFSDID (275 aa). Mg(2+) is bound by residues Asp42, His246, His248, and Asn282. Residues 439–557 are regulatory domain; the sequence is ANSPYALVSH…SLSQQEAKAA (119 aa).

Belongs to the alpha-IPM synthase/homocitrate synthase family. LeuA type 2 subfamily. As to quaternary structure, homodimer. The cofactor is Mg(2+).

It localises to the cytoplasm. The enzyme catalyses 3-methyl-2-oxobutanoate + acetyl-CoA + H2O = (2S)-2-isopropylmalate + CoA + H(+). It participates in amino-acid biosynthesis; L-leucine biosynthesis; L-leucine from 3-methyl-2-oxobutanoate: step 1/4. Its function is as follows. Catalyzes the condensation of the acetyl group of acetyl-CoA with 3-methyl-2-oxobutanoate (2-ketoisovalerate) to form 3-carboxy-3-hydroxy-4-methylpentanoate (2-isopropylmalate). This Pseudomonas putida (strain W619) protein is 2-isopropylmalate synthase.